We begin with the raw amino-acid sequence, 138 residues long: Large ribosomal subunit protein uL16 (138 aa).

This sequence belongs to the universal ribosomal protein uL16 family. Part of the 50S ribosomal subunit.

In terms of biological role, binds 23S rRNA and is also seen to make contacts with the A and possibly P site tRNAs. The protein is Large ribosomal subunit protein uL16 of Anaeromyxobacter dehalogenans (strain 2CP-C).